A 392-amino-acid polypeptide reads, in one-letter code: Succinate--CoA ligase [ADP-forming] subunit beta (392 aa).

An ATP-grasp domain is found at 9–248 (KDILRKFGVA…TNEEDPFEVE (240 aa)). ATP-binding positions include Lys-50, 57 to 59 (GRG), Glu-103, Met-106, and Glu-111. 2 residues coordinate Mg(2+): Asn-203 and Asp-217. Residues Asn-268 and 325 to 327 (GIV) each bind substrate.

It belongs to the succinate/malate CoA ligase beta subunit family. Heterotetramer of two alpha and two beta subunits. It depends on Mg(2+) as a cofactor.

It catalyses the reaction succinate + ATP + CoA = succinyl-CoA + ADP + phosphate. It carries out the reaction GTP + succinate + CoA = succinyl-CoA + GDP + phosphate. The protein operates within carbohydrate metabolism; tricarboxylic acid cycle; succinate from succinyl-CoA (ligase route): step 1/1. Succinyl-CoA synthetase functions in the citric acid cycle (TCA), coupling the hydrolysis of succinyl-CoA to the synthesis of either ATP or GTP and thus represents the only step of substrate-level phosphorylation in the TCA. The beta subunit provides nucleotide specificity of the enzyme and binds the substrate succinate, while the binding sites for coenzyme A and phosphate are found in the alpha subunit. In Pelodictyon phaeoclathratiforme (strain DSM 5477 / BU-1), this protein is Succinate--CoA ligase [ADP-forming] subunit beta.